We begin with the raw amino-acid sequence, 190 residues long: Cancer-related nucleoside-triphosphatase homolog (190 aa).

Alanine 2 is subject to N-acetylalanine. Residues 9–16 and 109–116 contribute to the ATP site; these read GPPGVGKT and ICVIDEVG. Lysine 165 carries the post-translational modification N6-acetyllysine.

The protein belongs to the THEP1 NTPase family. As to quaternary structure, monomer.

It catalyses the reaction a ribonucleoside 5'-triphosphate + H2O = a ribonucleoside 5'-diphosphate + phosphate + H(+). It carries out the reaction 5-methyl-UTP + H2O = 5-methyl-UDP + phosphate + H(+). The enzyme catalyses CTP + H2O = CDP + phosphate + H(+). The catalysed reaction is ATP + H2O = ADP + phosphate + H(+). It catalyses the reaction GTP + H2O = GDP + phosphate + H(+). Its function is as follows. Has nucleotide phosphatase activity towards ATP, GTP, CTP, TTP and UTP. Hydrolyzes nucleoside diphosphates with lower efficiency. The sequence is that of Cancer-related nucleoside-triphosphatase homolog (NTPCR) from Bos taurus (Bovine).